Consider the following 112-residue polypeptide: MNTLIAFAVLLLLSTTLGDTDDKVSHEEIQERKELSGISEELLLQQLEAVEAALMEKERLEEMEEDGNSREKRCMALNVPCDSHFKCCKNLVCQDPTLTWFYGSKYCYRKKS.

The first 18 residues, 1 to 18 (MNTLIAFAVLLLLSTTLG), serve as a signal peptide directing secretion. A propeptide spanning residues 19 to 73 (DTDDKVSHEEIQERKELSGISEELLLQQLEAVEAALMEKERLEEMEEDGNSREKR) is cleaved from the precursor. Disulfide bonds link Cys74–Cys88, Cys81–Cys93, and Cys87–Cys107.

Belongs to the neurotoxin 14 (magi-1) family. 08 (Ltx-4) subfamily. As to expression, expressed by the venom gland.

It is found in the secreted. Probable ion channel inhibitor. This chain is U15-hexatoxin-Hi1a, found in Hadronyche infensa (Fraser island funnel-web spider).